Here is a 360-residue protein sequence, read N- to C-terminus: F-box protein SKP2A (360 aa).

One can recognise an F-box domain in the interval 25-71 (IKEWKDIPVELLMRILSLVDDRNVIVASGVCTGWRDAISFGLTRLRL). (indol-3-yl)acetate-binding positions include 127-128 (SL), 149-152 (NLSG), 175-178 (NLCG), and asparagine 202.

Part of a SCF (ASK-cullin-F-box) protein ligase complex. Interacts with CUL1 (RUB1-modified and non-modified isoforms), SKP1A, SKP1B and ASK18. Recruit DPB and phosphorylated E2FC. Interacts with auxin. Auxin controls the interaction with DPB. Polyubiquitinated and subsequently targeted to proteasome. Auxin promotes this ubiquitination-mediated degradation. As to expression, expressed in embryo, seedlings, hypocotyl, roots, leaves and flowers.

It localises to the nucleus. It participates in protein modification; protein ubiquitination. Functionally, component of SCF(SKP2A) E3 ubiquitin ligase complexes, which mediate the ubiquitination and subsequent proteasomal degradation of target proteins (including cell cycle repressors). Acts as an auxin receptor; one active auxin is indole-3-acetate. Regulates the stability of the transcription factors E2FC and DPB, repressors of cell proliferation. Confers increase tolerance to osmotic stress by promoting cell division, especially in meristems. Promotes the formation of lateral root primordia. The chain is F-box protein SKP2A (SKP2A) from Arabidopsis thaliana (Mouse-ear cress).